A 118-amino-acid chain; its full sequence is Beta-defensin 126 (118 aa).

The N-terminal stretch at 1–20 (MKSLLFTLAVFMLLAQLVSG) is a signal peptide. The interval 21–63 (SWYVKKCLNDVGICKKKCKPEELHVKNGWAMCGKQRDCCVPAD) is in vitro binds to LPS, mediates antimicrobial activity and inhibits LPS-mediated inflammation. Intrachain disulfides connect Cys27–Cys58, Cys34–Cys52, and Cys38–Cys59.

Belongs to the beta-defensin family. In terms of assembly, homodimer or homooligomer; disulfide-linked. Post-translationally, O-glycosylated; glycans contain alpha(2,3)-linked sialic acids.

The protein localises to the secreted. Functionally, highly glycosylated atypical beta-defensin involved in several aspects of sperm function. Facilitates sperm transport in the female reproductive tract and contributes to sperm protection against immunodetection; both functions are probably implicating the negative surface charge provided by its O-linked oligosaccharides in the sperm glycocalyx. Involved in binding of sperm to oviductal epithelial cells to form a sperm reservoir until ovulation. Release from the sperm surface during capacitation and ovaluation by an elevation of oviductal fluid pH is unmasking other surface components and allows sperm to penetrate the cumulus matrix and bind to the zona pellucida of the oocyte. In vitro has antimicrobial activity and may inhibit LPS-mediated inflammation. In Pongo pygmaeus (Bornean orangutan), this protein is Beta-defensin 126 (DEFB126).